The following is a 338-amino-acid chain: Large ribosomal subunit protein uL3 (338 aa).

Residues 228–237 are compositionally biased toward basic residues; that stretch reads HKHRKGHRRT. The segment at 228–255 is disordered; it reads HKHRKGHRRTGTIGPQAPALMFTQPRPG.

Belongs to the universal ribosomal protein uL3 family. Part of the 50S ribosomal subunit. Forms a cluster with proteins L14 and L24e.

One of the primary rRNA binding proteins, it binds directly near the 3'-end of the 23S rRNA, where it nucleates assembly of the 50S subunit. The sequence is that of Large ribosomal subunit protein uL3 from Pyrobaculum calidifontis (strain DSM 21063 / JCM 11548 / VA1).